The following is a 506-amino-acid chain: MKEYQVYLERDRSRQQDFLYPLIFREYIYGLAYSHDFNRSIFVENVGYDNKSSLLIVKRLITRMYQQNHLIISANDSNKNPFLGYNKNFYSQIISDGFAVVVEIPFFLQLSSSLEEAEIVKSYHNLRSIHSIFPFLEDKFTYLNYVSDIRIPYPIHLEILVQILRYWVKDASFFHLLRFFLYHFSNRNSLITPKKSISTFSKSNPRLFLFLYNFYVCEYESIFRFLRNQSSHLRLKSFSVFFERIFFYAKREHLVKVFPKDFSSTLTFFKDPFIHYVRYQGKSILASKNAPLLMNKWKHYFIHLWQCFFDVWSQPGTIHINQLSEHSFHFLGYFSNVRLNRSVVRSQMLQNTFLIEIVIKKLDIIVPIIPLIRSLAKAKFCNVLGHPLSKSVWADSSDFDIIDRFLRICRNLSHYYNGSSKKKNLYRIKYILRLSCIKTLACKHKSTVRAFLKKSGSEELLEEFFTEEEEILSLIFPRTSSTLQRLHRNRIWYLDILFSNDLVNHE.

Belongs to the intron maturase 2 family. MatK subfamily.

The protein resides in the plastid. It is found in the chloroplast. Its function is as follows. Usually encoded in the trnK tRNA gene intron. Probably assists in splicing its own and other chloroplast group II introns. This chain is Maturase K, found in Wisteria frutescens (American wisteria).